The following is a 581-amino-acid chain: uncharacterized protein (581 aa).

An N-terminal signal peptide occupies residues 1–28 (MDSKAVSPLIGFVLMLAIIMGLIGIMQA).

This is an uncharacterized protein from Archaeoglobus fulgidus (strain ATCC 49558 / DSM 4304 / JCM 9628 / NBRC 100126 / VC-16).